Here is a 1591-residue protein sequence, read N- to C-terminus: Rho guanine nucleotide exchange factor TIAM1 (1591 aa).

Residues 1 to 78 (MGNAESQHVE…AENGLEPFSQ (78 aa)) form a disordered region. A lipid anchor (N-myristoyl glycine) is attached at Gly-2. Residues 7–19 (QHVEHEFYGEKHA) show a composition bias toward basic and acidic residues. Residues 20-49 (SLGRKHTSRSLRLSHKTRRTRHASSGKVIH) show a composition bias toward basic residues. Low complexity predominate over residues 53–67 (EVSTRSSSTPSIPQS). Residue Ser-231 is modified to Phosphoserine. Disordered stretches follow at residues 298-379 (SEGA…GDAA) and 393-422 (MSTTNSESLEEAGSAHSDEQSSGTLSSPGQ). Polar residues-rich tracts occupy residues 300–313 (GATNPQISHSNSMQ) and 340–361 (TTDTDLLSRRSNATNSSYSPTT). A phosphoserine mark is found at Ser-356 and Ser-358. Positions 367-377 (GSDSGSSSTGD) are enriched in low complexity. Positions 412 to 422 (QSSGTLSSPGQ) are enriched in polar residues. A PH 1 domain is found at 434–549 (VRKAGALAVK…TAIHSACATA (116 aa)). The residue at position 695 (Ser-695) is a Phosphoserine. In terms of domain architecture, RBD spans 765-832 (TPSWFCLPNN…QPEEDIYELL (68 aa)). The residue at position 829 (Tyr-829) is a Phosphotyrosine; by NTRK2. Residues 845 to 908 (SIHIEKSDTA…NNRAADALNS (64 aa)) form the PDZ domain. The segment at 939–1034 (SPPHRVDGPA…TGPQLATMRQ (96 aa)) is disordered. Residues 958 to 975 (LTSNPGHSLCSEQGSSAE) are compositionally biased toward polar residues. Acidic residues predominate over residues 977-990 (APEETEGPDLESSD). Residues 1014-1024 (PSDQSPSPQDS) are compositionally biased toward low complexity. The segment covering 1025 to 1034 (TGPQLATMRQ) has biased composition (polar residues). Positions 1040-1234 (KLRKVICELL…NKVASHINEM (195 aa)) constitute a DH domain. The 137-residue stretch at 1261-1397 (DLSMGDLLLH…KAVHSILRDK (137 aa)) folds into the PH 2 domain. Tyr-1323 bears the Phosphotyrosine mark. Residues Lys-1404 and Lys-1420 each participate in a glycyl lysine isopeptide (Lys-Gly) (interchain with G-Cter in ubiquitin) cross-link. The interval 1456 to 1482 (TIDSDAVSASSPEKESQQPPGGGDTDR) is disordered. A Phosphoserine modification is found at Ser-1519.

It belongs to the TIAM family. In terms of assembly, component of the Par polarity complex, composed of at least phosphorylated PRKCZ, PARD3 and TIAM1. Interacts with NTRK2; mediates the activation of RAC1 by BDNF. Interacts with MAPK8IP2 and CD44. Interacts with BAIAP2. Interacts with EPHA8; regulates clathrin-mediated endocytosis of EPHA8. Interacts with PARD3. Interacts (via PDZ domain) with CNTNAP4, SDC1 and SDC3 (via C-terminus). Ubiquitinated. Undergoes 'Lys-48' ubiquitination at Lys-1404 and Lys-1420 by a CUL3(KBTBD6/7) E3 ubiquitin ligase complex composed of CUL3, RBX1, KBTBD6 and KBTBD7. 'Lys-48' ubiquitination at Lys-1404 and Lys-1420 triggers proteasomal degradation. Ubiquitination at Lys-1404 and Lys-1420 by CUL3(KBTBD6/7) also requires the membrane-associated protein GABARAP and may therefore be spatially restricted within the cell. Found in virtually all analyzed tumor cell lines including B- and T-lymphomas, neuroblastomas, melanomas and carcinomas.

The protein resides in the cell junction. It is found in the cell membrane. Functionally, guanyl-nucleotide exchange factor that activates RHO-like proteins and connects extracellular signals to cytoskeletal activities. Activates RAC1, CDC42, and to a lesser extent RHOA and their downstream signaling to regulate processes like cell adhesion and cell migration. The chain is Rho guanine nucleotide exchange factor TIAM1 from Homo sapiens (Human).